The following is a 174-amino-acid chain: ATP-dependent protease subunit HslV (174 aa).

Residue threonine 2 is part of the active site. Positions 157, 160, and 163 each coordinate Na(+).

This sequence belongs to the peptidase T1B family. HslV subfamily. As to quaternary structure, a double ring-shaped homohexamer of HslV is capped on each side by a ring-shaped HslU homohexamer. The assembly of the HslU/HslV complex is dependent on binding of ATP.

The protein localises to the cytoplasm. The enzyme catalyses ATP-dependent cleavage of peptide bonds with broad specificity.. Allosterically activated by HslU binding. Protease subunit of a proteasome-like degradation complex believed to be a general protein degrading machinery. This Shewanella piezotolerans (strain WP3 / JCM 13877) protein is ATP-dependent protease subunit HslV.